Here is a 92-residue protein sequence, read N- to C-terminus: ATP synthase subunit c (92 aa).

2 consecutive transmembrane segments (helical) span residues 20–40 (GAGL…GTGL) and 71–91 (MAIS…LVFV).

Belongs to the ATPase C chain family. In terms of assembly, F-type ATPases have 2 components, F(1) - the catalytic core - and F(0) - the membrane proton channel. F(1) has five subunits: alpha(3), beta(3), gamma(1), delta(1), epsilon(1). F(0) has three main subunits: a(1), b(2) and c(10-14). The alpha and beta chains form an alternating ring which encloses part of the gamma chain. F(1) is attached to F(0) by a central stalk formed by the gamma and epsilon chains, while a peripheral stalk is formed by the delta and b chains.

Its subcellular location is the cell membrane. In terms of biological role, f(1)F(0) ATP synthase produces ATP from ADP in the presence of a proton or sodium gradient. F-type ATPases consist of two structural domains, F(1) containing the extramembraneous catalytic core and F(0) containing the membrane proton channel, linked together by a central stalk and a peripheral stalk. During catalysis, ATP synthesis in the catalytic domain of F(1) is coupled via a rotary mechanism of the central stalk subunits to proton translocation. Functionally, key component of the F(0) channel; it plays a direct role in translocation across the membrane. A homomeric c-ring of between 10-14 subunits forms the central stalk rotor element with the F(1) delta and epsilon subunits. This Mycoplasmopsis pulmonis (strain UAB CTIP) (Mycoplasma pulmonis) protein is ATP synthase subunit c.